A 341-amino-acid polypeptide reads, in one-letter code: tRNA N6-adenosine threonylcarbamoyltransferase (341 aa).

The Fe cation site is built by His-115 and His-119. Residues 137-141 (IVSGG), Asp-170, Gly-183, Asp-187, and Asn-276 each bind substrate. Residue Asp-304 coordinates Fe cation.

It belongs to the KAE1 / TsaD family. Requires Fe(2+) as cofactor.

The protein resides in the cytoplasm. It carries out the reaction L-threonylcarbamoyladenylate + adenosine(37) in tRNA = N(6)-L-threonylcarbamoyladenosine(37) in tRNA + AMP + H(+). Its function is as follows. Required for the formation of a threonylcarbamoyl group on adenosine at position 37 (t(6)A37) in tRNAs that read codons beginning with adenine. Is involved in the transfer of the threonylcarbamoyl moiety of threonylcarbamoyl-AMP (TC-AMP) to the N6 group of A37, together with TsaE and TsaB. TsaD likely plays a direct catalytic role in this reaction. In Staphylococcus aureus (strain MSSA476), this protein is tRNA N6-adenosine threonylcarbamoyltransferase.